Reading from the N-terminus, the 409-residue chain is Dual-specificity RNA methyltransferase RlmN (409 aa).

Glu-121 serves as the catalytic Proton acceptor. Residues 127 to 376 enclose the Radical SAM core domain; the sequence is EEGRGTLCIS…IRTPRGRDIL (250 aa). Cys-134 and Cys-379 are disulfide-bonded. Residues Cys-141, Cys-145, and Cys-148 each contribute to the [4Fe-4S] cluster site. Residues 205-206, Ser-237, 259-261, and Asn-336 each bind S-adenosyl-L-methionine; these read GE and SLH. The active-site S-methylcysteine intermediate is Cys-379.

It belongs to the radical SAM superfamily. RlmN family. [4Fe-4S] cluster is required as a cofactor.

It is found in the cytoplasm. It catalyses the reaction adenosine(2503) in 23S rRNA + 2 reduced [2Fe-2S]-[ferredoxin] + 2 S-adenosyl-L-methionine = 2-methyladenosine(2503) in 23S rRNA + 5'-deoxyadenosine + L-methionine + 2 oxidized [2Fe-2S]-[ferredoxin] + S-adenosyl-L-homocysteine. It carries out the reaction adenosine(37) in tRNA + 2 reduced [2Fe-2S]-[ferredoxin] + 2 S-adenosyl-L-methionine = 2-methyladenosine(37) in tRNA + 5'-deoxyadenosine + L-methionine + 2 oxidized [2Fe-2S]-[ferredoxin] + S-adenosyl-L-homocysteine. Its function is as follows. Specifically methylates position 2 of adenine 2503 in 23S rRNA and position 2 of adenine 37 in tRNAs. m2A2503 modification seems to play a crucial role in the proofreading step occurring at the peptidyl transferase center and thus would serve to optimize ribosomal fidelity. The sequence is that of Dual-specificity RNA methyltransferase RlmN from Rhizobium etli (strain ATCC 51251 / DSM 11541 / JCM 21823 / NBRC 15573 / CFN 42).